Consider the following 298-residue polypeptide: HTH-type transcriptional regulator ArgP (298 aa).

The 57-residue stretch at 4–60 (LDYKWIEALDAVVAQGGFERAAEELYISQSAVSQRIKQLERFLAQPVLIREQPPKPT) folds into the HTH lysR-type domain. The H-T-H motif DNA-binding region spans 21-40 (FERAAEELYISQSAVSQRIK).

Belongs to the LysR transcriptional regulatory family. Homodimer.

In terms of biological role, controls the transcription of genes involved in arginine and lysine metabolism. The chain is HTH-type transcriptional regulator ArgP from Vibrio vulnificus (strain CMCP6).